Here is a 520-residue protein sequence, read N- to C-terminus: DnaJ homolog l(2)tid, mitochondrial (520 aa).

Residues 1–62 constitute a mitochondrion transit peptide; that stretch reads MMISCKKLFV…RRLHTTRDLL (62 aa). Arg30 bears the Omega-N-methylarginine mark. In terms of domain architecture, J spans 65-130; the sequence is DYYATLGVAK…QKRREYDTYG (66 aa). Lys106 is modified (N6-acetyllysine). The CR-type zinc finger occupies 214–292; it reads GVNKDVNVNV…CEGKGRTVQR (79 aa). The Zn(2+) site is built by Cys227, Cys230, Cys244, Cys247, Cys266, Cys269, Cys280, and Cys283. The CXXCXGXG motif; approximate repeat unit spans residues 227-234; sequence CPKCAGTK. Residues 244 to 251 form a CXXCXGXG motif repeat; that stretch reads CQYCNGTG. One copy of the CXXCXGXG motif; approximate repeat lies at 266–273; the sequence is CRYCQGTR. Residues 280 to 287 form a CXXCXGXG motif repeat; that stretch reads CSECEGKG. The interval 430-520 is disordered; that stretch reads QIHGIANRKD…FISKIKSMFN (91 aa). Low complexity predominate over residues 446-476; sequence AGASEEPGAGAAAKASAAAAGSGASKPGPGA. Residues 479 to 495 show a composition bias toward basic and acidic residues; it reads SEGKDQWTDNKKTKAKE. Over residues 496–511 the composition is skewed to gly residues; the sequence is GGGSGSGQGDGGGGGF.

Interacts with ptc (via C-terminal cytoplasmic region); the interaction is probably direct. Interacts with hh/hedgehog; the interaction is probably mediated by the hedgehog receptor ptc. In terms of processing, appears to produce proteins of differing size. Predicted to have a molecular mass of 56 kDa (TID56) however proteins of 50 kDa, 47 kDa and 40 kDa have been identified and named TID50, TID47 and TID40. TID50 and TID40 localize to the mitochondria while TID47 localizes to the cytoplasm. TID50 is probably TID56 that has undergone mitochondrial transit peptide processing. TID40 and TID47 may be alternately processed proteins or may be isoforms resulting from alternative splicing. In terms of tissue distribution, ubiquitously expressed throughout embryonic development. In larvae, expression is seen in sensory organs, gopplet cells, gonads, imaginal disks, proventriculus, fat body, hematopoietic organ, midgut, Malpighian tubules and ring gland.

It is found in the cytoplasm. The protein localises to the cytosol. Its subcellular location is the mitochondrion. The protein resides in the mitochondrion outer membrane. Functionally, involved in hh/hedgehog signaling. May act as a tumor suppressor in larval imaginal disks. The polypeptide is DnaJ homolog l(2)tid, mitochondrial (Drosophila melanogaster (Fruit fly)).